The sequence spans 544 residues: MGCVRSKEAKGPALKYQPDNSNVVPVSAHLGHYGPEPTIMGQSPAMKTQNNSHPTALSPFGGVSSPMTPFGGASTSFTSVTVNNPFPAVITGGVTFFVALYDYEARTSDDLSFRKGDRFQIINNTEGDWWEARSINTGENGYIPSNYVAPADSIQSEEWYFGKLSRKDTERLLLLPGNERGTFLIRESETTKGAYSLSLRDWDETKGDNCKHYKIRKLDNGGYYITTRTQFMSLQMLVKHYTEHVDGLCYKLTTVCPQVKPQTQGIAKDAWEIPRESLRLDVRLGQGCFGEVWMGTWNGTTKVAIKTLKPGTMSPEAFLEEAQIMKKLRHDKLVPLYAVVSEEPIYIVTEFMGKGSLLDFLKEGDGKHLKLPQLVDMASQIADGMAFIERMNYIHRDLRAANILVADNLVCKIADFGLARLIEDNEYTARQGAKFPIKWTAPEAALYGRFTIKSDVWSFGILLTELVTKGRVPYPGMVNREVLEQVDRGYRMPCPQGCPESLHEMMRQCWKKEPDERPTFEYIQSFLEDYFTATEPQYQPGDNL.

Residue Gly-2 is the site of N-myristoyl glycine attachment. In terms of domain architecture, SH3 spans 92 to 153 (GGVTFFVALY…PSNYVAPADS (62 aa)). Residues 159-256 (WYFGKLSRKD…GLCYKLTTVC (98 aa)) enclose the SH2 domain. The Protein kinase domain occupies 278-531 (LRLDVRLGQG…YIQSFLEDYF (254 aa)). ATP contacts are provided by residues 284 to 292 (LGQGCFGEV) and Lys-306. Asp-397 serves as the catalytic Proton acceptor. A Phosphotyrosine; by autocatalysis modification is found at Tyr-427.

It belongs to the protein kinase superfamily. Tyr protein kinase family. SRC subfamily.

It carries out the reaction L-tyrosyl-[protein] + ATP = O-phospho-L-tyrosyl-[protein] + ADP + H(+). The protein is Tyrosine-protein kinase Yes (yes) of Xiphophorus hellerii (Green swordtail).